Here is a 533-residue protein sequence, read N- to C-terminus: Calcium uptake protein 1 homolog, mitochondrial (533 aa).

The N-terminal 13 residues, M1–R13, are a transit peptide targeting the mitochondrion. The tract at residues P127–V147 is disordered. 3 consecutive EF-hand domains span residues T270 to Q305, K337 to D358, and L465 to R500. The Ca(2+) site is built by D283, D285, N287, and E294.

The protein belongs to the MICU1 family. MICU1 subfamily.

The protein resides in the mitochondrion intermembrane space. Its subcellular location is the mitochondrion inner membrane. In terms of biological role, calcium sensor of the mitochondrial calcium uniporter (mcu-1) channel, which senses calcium level via its EF-hand domains. At low calcium levels, micu-1 occludes the pore of the mcu-1 channel, preventing mitochondrial calcium uptake. At higher calcium levels, calcium-binding to micu-1 induces a conformational change that weakens mcu-1-micu-1 interactions and moves micu-1 away from the pore, allowing calcium permeation through the mcu-1 channel. Also required to protect against manganese toxicity by preventing manganese uptake by mcu-1. Modulates the activity of the mitochondrial calcium uniporter protein mcu-1 depending on the level of intracellular calcium in PLM touch receptor neurons following axonal injury. In Caenorhabditis briggsae, this protein is Calcium uptake protein 1 homolog, mitochondrial.